An 89-amino-acid chain; its full sequence is Small ribosomal subunit protein uS15 (89 aa).

The protein belongs to the universal ribosomal protein uS15 family. As to quaternary structure, part of the 30S ribosomal subunit. Forms a bridge to the 50S subunit in the 70S ribosome, contacting the 23S rRNA.

One of the primary rRNA binding proteins, it binds directly to 16S rRNA where it helps nucleate assembly of the platform of the 30S subunit by binding and bridging several RNA helices of the 16S rRNA. Its function is as follows. Forms an intersubunit bridge (bridge B4) with the 23S rRNA of the 50S subunit in the ribosome. The polypeptide is Small ribosomal subunit protein uS15 (Corynebacterium urealyticum (strain ATCC 43042 / DSM 7109)).